The primary structure comprises 197 residues: Prefoldin subunit 3 (197 aa).

Ala2 is modified (N-acetylalanine). Residue Lys59 is modified to N6-acetyllysine.

The protein belongs to the prefoldin subunit alpha family. As to quaternary structure, heterohexamer of two PFD-alpha type and four PFD-beta type subunits. Binds to the C-terminal part of VHL.

It is found in the cytoplasm. The protein localises to the nucleus. Binds specifically to cytosolic chaperonin (c-CPN) and transfers target proteins to it. Binds to nascent polypeptide chain and promotes folding in an environment in which there are many competing pathways for nonnative proteins. The polypeptide is Prefoldin subunit 3 (VBP1) (Bos taurus (Bovine)).